We begin with the raw amino-acid sequence, 262 residues long: Phenylalanine-4-hydroxylase (262 aa).

H121, H126, and E166 together coordinate Fe cation.

This sequence belongs to the biopterin-dependent aromatic amino acid hydroxylase family. As to quaternary structure, monomer. Fe(2+) serves as cofactor.

The enzyme catalyses (6R)-L-erythro-5,6,7,8-tetrahydrobiopterin + L-phenylalanine + O2 = (4aS,6R)-4a-hydroxy-L-erythro-5,6,7,8-tetrahydrobiopterin + L-tyrosine. It participates in amino-acid degradation; L-phenylalanine degradation; acetoacetate and fumarate from L-phenylalanine: step 1/6. This is Phenylalanine-4-hydroxylase (phhA) from Pseudomonas aeruginosa (strain ATCC 15692 / DSM 22644 / CIP 104116 / JCM 14847 / LMG 12228 / 1C / PRS 101 / PAO1).